The primary structure comprises 196 residues: Holliday junction branch migration complex subunit RuvA (196 aa).

The interval 1-69 is domain I; sequence MIVGLRGTII…EDAHLLFGFC (69 aa). Positions 70–148 are domain II; the sequence is EEIEKQTFER…QLLQSQEESI (79 aa). The segment at 149–157 is flexible linker; that stretch reads APSNNLKYE. A domain III region spans residues 157-196; that stretch reads EASLALQSLGFKRNEIQKVLEHIEALSVSEIVKEALKRLA.

The protein belongs to the RuvA family. Homotetramer. Forms an RuvA(8)-RuvB(12)-Holliday junction (HJ) complex. HJ DNA is sandwiched between 2 RuvA tetramers; dsDNA enters through RuvA and exits via RuvB. An RuvB hexamer assembles on each DNA strand where it exits the tetramer. Each RuvB hexamer is contacted by two RuvA subunits (via domain III) on 2 adjacent RuvB subunits; this complex drives branch migration. In the full resolvosome a probable DNA-RuvA(4)-RuvB(12)-RuvC(2) complex forms which resolves the HJ.

The protein localises to the cytoplasm. Functionally, the RuvA-RuvB-RuvC complex processes Holliday junction (HJ) DNA during genetic recombination and DNA repair, while the RuvA-RuvB complex plays an important role in the rescue of blocked DNA replication forks via replication fork reversal (RFR). RuvA specifically binds to HJ cruciform DNA, conferring on it an open structure. The RuvB hexamer acts as an ATP-dependent pump, pulling dsDNA into and through the RuvAB complex. HJ branch migration allows RuvC to scan DNA until it finds its consensus sequence, where it cleaves and resolves the cruciform DNA. This Helicobacter hepaticus (strain ATCC 51449 / 3B1) protein is Holliday junction branch migration complex subunit RuvA.